Consider the following 619-residue polypeptide: MALLQIAEPGQSPQPHQRRLAVGIDLGTTNSLVATLRSGLAESLKTPRGNDPASAVRYLPDGRRVGRAAKAAAAVDPLNTVLSVKRLMGRGIADVKLLGEQLPYRFAEGESHMPFIETVQGPKSPVEVSAEILRVLRRRAEEALGGELVGAVITVPAYFDEAQRQATKDAARLAGLDVLRLLNEPTAAAVAYGLDRGAEGVVAIYDLGGGTFDISILRLTRGVFEVLATGGDSALGGDDFDHAIANWIVEQAGLSADLDPGVQRHLLQLACAAKEALSDSGSVTLAYGPWQGELSRERFEALIEPLVARSLKACRRALRDAGIEPQEIAAVVMVGGSTRVPRVRRAAAELFDRQPLTDIDPDQVVAIGAALQADTLAGNGRDGEELLLLDVNPLSLGLETMGRLMEKVIPRNTTLPVARAQEFTTYKDGQTAMLIHVLQGERELVKDCRSLARFELRGIPPMVAGAAKIRVTFQVDADGLLNVSARELGSGYEASVQVKPSYGLTDGEIARMLKDSFEYAGGDKAARALREQQVEAQRLLEAVQAALEADGEALLSPAERAAIEAQMQALRGVLDGPDAAVIETHVRHLTQVTDAFAARRLDASVKAALSGRRLNEIEE.

The protein belongs to the heat shock protein 70 family.

Chaperone involved in the maturation of iron-sulfur cluster-containing proteins. Has a low intrinsic ATPase activity which is markedly stimulated by HscB. In Azotobacter vinelandii, this protein is Chaperone protein HscA homolog.